A 774-amino-acid chain; its full sequence is Formin-like protein 13 (774 aa).

A signal peptide spans 1-22 (MRRRVALSTAIALLVGAQLCVA). Residues 51–67 (PPPPMSGSEAVPPPPPA) are compositionally biased toward pro residues. The disordered stretch occupies residues 51 to 78 (PPPPMSGSEAVPPPPPAAAASATTGGGR). Positions 68–78 (AAASATTGGGR) are enriched in low complexity. The helical transmembrane segment at 89 to 109 (IALSAGLVALAVASYSCCLLL) threads the bilayer. 4 disordered regions span residues 130-163 (AAAAVAARVPSDVGSSSRQHRSPPPSSTASDAIY), 176-338 (HEKS…HLKP), 374-402 (FLNSGGGGAGSSDPAARRGGSGKQERRLL), and 740-774 (GSGKSFRVPAGTSLPPHRNENRRVLSSSDEDSSSS). A compositionally biased stretch (pro residues) spans 194 to 216 (DLRPLPPLKRPESQPPPPPPSTP). Low complexity predominate over residues 242 to 261 (SSFSRSTSQHSTLEQTAMPP). Pro residues predominate over residues 262–286 (MAAPAPPQTNPPRPVRPPPPPPPPR). The FH2 domain occupies 326–749 (GAARPPKPPH…GSGKSFRVPA (424 aa)).

Belongs to the formin-like family. Class-I subfamily.

It localises to the membrane. In Oryza sativa subsp. japonica (Rice), this protein is Formin-like protein 13 (FH13).